Here is a 161-residue protein sequence, read N- to C-terminus: Ribonuclease H (161 aa).

Residues 1–142 (MLKLVKMFSD…CDKIARQSAQ (142 aa)) enclose the RNase H type-1 domain. Mg(2+)-binding residues include Asp10, Glu48, Asp70, and Asp134.

The protein belongs to the RNase H family. Monomer. Mg(2+) serves as cofactor.

The protein resides in the cytoplasm. It catalyses the reaction Endonucleolytic cleavage to 5'-phosphomonoester.. Its function is as follows. Endonuclease that specifically degrades the RNA of RNA-DNA hybrids. This Buchnera aphidicola subsp. Schizaphis graminum (strain Sg) protein is Ribonuclease H (rnhA).